Consider the following 156-residue polypeptide: Small ribosomal subunit protein uS7 (156 aa).

This sequence belongs to the universal ribosomal protein uS7 family. In terms of assembly, part of the 30S ribosomal subunit. Contacts proteins S9 and S11.

Its function is as follows. One of the primary rRNA binding proteins, it binds directly to 16S rRNA where it nucleates assembly of the head domain of the 30S subunit. Is located at the subunit interface close to the decoding center, probably blocks exit of the E-site tRNA. The protein is Small ribosomal subunit protein uS7 of Kocuria rhizophila (strain ATCC 9341 / DSM 348 / NBRC 103217 / DC2201).